The primary structure comprises 188 residues: Elongation factor P (188 aa).

The protein belongs to the elongation factor P family.

The protein resides in the cytoplasm. It functions in the pathway protein biosynthesis; polypeptide chain elongation. In terms of biological role, involved in peptide bond synthesis. Stimulates efficient translation and peptide-bond synthesis on native or reconstituted 70S ribosomes in vitro. Probably functions indirectly by altering the affinity of the ribosome for aminoacyl-tRNA, thus increasing their reactivity as acceptors for peptidyl transferase. The sequence is that of Elongation factor P from Ralstonia nicotianae (strain ATCC BAA-1114 / GMI1000) (Ralstonia solanacearum).